Here is a 415-residue protein sequence, read N- to C-terminus: Homoserine O-acetyltransferase (415 aa).

Residues 47–369 (NAVLVCHGLT…HGHDAFLVEP (323 aa)) form the AB hydrolase-1 domain. The active-site Nucleophile is Ser-155. Substrate is bound at residue Arg-226. Residues Asp-329 and His-362 contribute to the active site. Residue Asp-363 coordinates substrate. The interval 387 to 415 (RAVTDTATDGGEPDEEEDFAPVHSSLFSR) is disordered.

The protein belongs to the AB hydrolase superfamily. MetX family. As to quaternary structure, homodimer.

It is found in the cytoplasm. The catalysed reaction is L-homoserine + acetyl-CoA = O-acetyl-L-homoserine + CoA. The protein operates within amino-acid biosynthesis; L-methionine biosynthesis via de novo pathway; O-acetyl-L-homoserine from L-homoserine: step 1/1. Transfers an acetyl group from acetyl-CoA to L-homoserine, forming acetyl-L-homoserine. This is Homoserine O-acetyltransferase from Haloferax prahovense (strain DSM 18310 / JCM 13924 / TL6).